A 515-amino-acid polypeptide reads, in one-letter code: Maturase K (515 aa).

It belongs to the intron maturase 2 family. MatK subfamily.

It localises to the plastid. The protein localises to the chloroplast. Functionally, usually encoded in the trnK tRNA gene intron. Probably assists in splicing its own and other chloroplast group II introns. This is Maturase K from Pinus koraiensis (Korean pine).